Consider the following 360-residue polypeptide: 3-isopropylmalate dehydrogenase (360 aa).

An NAD(+)-binding site is contributed by 76–89; sequence GPKWDKIERDIRPE. 4 residues coordinate substrate: Arg96, Arg106, Arg134, and Asp224. Residues Asp224, Asp248, and Asp252 each coordinate Mg(2+). Position 282-294 (282-294) interacts with NAD(+); sequence GSAPDIAGLGIAN.

This sequence belongs to the isocitrate and isopropylmalate dehydrogenases family. LeuB type 1 subfamily. In terms of assembly, homodimer. Mg(2+) serves as cofactor. It depends on Mn(2+) as a cofactor.

It is found in the cytoplasm. The enzyme catalyses (2R,3S)-3-isopropylmalate + NAD(+) = 4-methyl-2-oxopentanoate + CO2 + NADH. The protein operates within amino-acid biosynthesis; L-leucine biosynthesis; L-leucine from 3-methyl-2-oxobutanoate: step 3/4. Its function is as follows. Catalyzes the oxidation of 3-carboxy-2-hydroxy-4-methylpentanoate (3-isopropylmalate) to 3-carboxy-4-methyl-2-oxopentanoate. The product decarboxylates to 4-methyl-2 oxopentanoate. The polypeptide is 3-isopropylmalate dehydrogenase (Pseudomonas putida (strain ATCC 47054 / DSM 6125 / CFBP 8728 / NCIMB 11950 / KT2440)).